Reading from the N-terminus, the 392-residue chain is O-phospho-L-seryl-tRNA:Cys-tRNA synthase (392 aa).

Pyridoxal 5'-phosphate is bound by residues 84–85, N191, and 214–216; these read AR and SGH. At K217 the chain carries N6-(pyridoxal phosphate)lysine.

It belongs to the SepCysS family. In terms of assembly, homodimer. Interacts with SepRS. Requires pyridoxal 5'-phosphate as cofactor.

It carries out the reaction O-phospho-L-seryl-tRNA(Cys) + hydrogen sulfide + H(+) = L-cysteinyl-tRNA(Cys) + phosphate. Its function is as follows. Converts O-phospho-L-seryl-tRNA(Cys) (Sep-tRNA(Cys)) to L-cysteinyl-tRNA(Cys) (Cys-tRNA(Cys)). The protein is O-phospho-L-seryl-tRNA:Cys-tRNA synthase of Methanopyrus kandleri (strain AV19 / DSM 6324 / JCM 9639 / NBRC 100938).